Reading from the N-terminus, the 561-residue chain is 2-succinyl-5-enolpyruvyl-6-hydroxy-3-cyclohexene-1-carboxylate synthase (561 aa).

The protein belongs to the TPP enzyme family. MenD subfamily. In terms of assembly, homodimer. Requires Mg(2+) as cofactor. Mn(2+) serves as cofactor. It depends on thiamine diphosphate as a cofactor.

The enzyme catalyses isochorismate + 2-oxoglutarate + H(+) = 5-enolpyruvoyl-6-hydroxy-2-succinyl-cyclohex-3-ene-1-carboxylate + CO2. It functions in the pathway quinol/quinone metabolism; 1,4-dihydroxy-2-naphthoate biosynthesis; 1,4-dihydroxy-2-naphthoate from chorismate: step 2/7. The protein operates within quinol/quinone metabolism; menaquinone biosynthesis. Functionally, catalyzes the thiamine diphosphate-dependent decarboxylation of 2-oxoglutarate and the subsequent addition of the resulting succinic semialdehyde-thiamine pyrophosphate anion to isochorismate to yield 2-succinyl-5-enolpyruvyl-6-hydroxy-3-cyclohexene-1-carboxylate (SEPHCHC). This Proteus mirabilis (strain HI4320) protein is 2-succinyl-5-enolpyruvyl-6-hydroxy-3-cyclohexene-1-carboxylate synthase.